We begin with the raw amino-acid sequence, 226 residues long: uncharacterized protein (226 aa).

Residues 121–141 (YLIGNIIGLPLTIPFILIPLI) traverse the membrane as a helical segment.

It to yeast YDL183c.

It is found in the membrane. This is an uncharacterized protein from Schizosaccharomyces pombe (strain 972 / ATCC 24843) (Fission yeast).